We begin with the raw amino-acid sequence, 955 residues long: 2-oxoglutarate dehydrogenase E1 component (955 aa).

Belongs to the alpha-ketoglutarate dehydrogenase family. Homodimer. Part of the 2-oxoglutarate dehydrogenase (OGDH) complex composed of E1 (2-oxoglutarate dehydrogenase), E2 (dihydrolipoamide succinyltransferase) and E3 (dihydrolipoamide dehydrogenase); the complex contains multiple copies of the three enzymatic components (E1, E2 and E3). The cofactor is thiamine diphosphate.

It carries out the reaction N(6)-[(R)-lipoyl]-L-lysyl-[protein] + 2-oxoglutarate + H(+) = N(6)-[(R)-S(8)-succinyldihydrolipoyl]-L-lysyl-[protein] + CO2. E1 component of the 2-oxoglutarate dehydrogenase (OGDH) complex which catalyzes the decarboxylation of 2-oxoglutarate, the first step in the conversion of 2-oxoglutarate to succinyl-CoA and CO(2). The chain is 2-oxoglutarate dehydrogenase E1 component from Bacillus cereus (strain AH187).